We begin with the raw amino-acid sequence, 395 residues long: Protochlorophyllide reductase B, chloroplastic (395 aa).

The N-terminal 59 residues, 1-59, are a transit peptide targeting the chloroplast; that stretch reads MALQAATSFLPSALSARKEGAAKDSAFFGVRLADGLKLDATSLGLRTKRVNTSSVAIRA.

Belongs to the short-chain dehydrogenases/reductases (SDR) family. POR subfamily.

The protein localises to the plastid. Its subcellular location is the chloroplast. The catalysed reaction is chlorophyllide a + NADP(+) = protochlorophyllide a + NADPH + H(+). The protein operates within porphyrin-containing compound metabolism; chlorophyll biosynthesis. Its function is as follows. Phototransformation of protochlorophyllide (Pchlide) to chlorophyllide (Chlide). This is Protochlorophyllide reductase B, chloroplastic (PORB) from Hordeum vulgare (Barley).